Consider the following 245-residue polypeptide: 1-(5-phosphoribosyl)-5-[(5-phosphoribosylamino)methylideneamino] imidazole-4-carboxamide isomerase (245 aa).

The active-site Proton acceptor is the Asp-11. Residue Asp-132 is the Proton donor of the active site.

It belongs to the HisA/HisF family.

Its subcellular location is the cytoplasm. The catalysed reaction is 1-(5-phospho-beta-D-ribosyl)-5-[(5-phospho-beta-D-ribosylamino)methylideneamino]imidazole-4-carboxamide = 5-[(5-phospho-1-deoxy-D-ribulos-1-ylimino)methylamino]-1-(5-phospho-beta-D-ribosyl)imidazole-4-carboxamide. The protein operates within amino-acid biosynthesis; L-histidine biosynthesis; L-histidine from 5-phospho-alpha-D-ribose 1-diphosphate: step 4/9. This is 1-(5-phosphoribosyl)-5-[(5-phosphoribosylamino)methylideneamino] imidazole-4-carboxamide isomerase from Geobacillus kaustophilus (strain HTA426).